A 331-amino-acid polypeptide reads, in one-letter code: MTTTPRIAITPGEPAGIGPDLVVAVAQVPCAAQRVVLSDPALLRERARLLGLPLEIRPFDPQTPAAPDPAGCLTVMAHALNAPVRPGHLDTANARHVLATLESAVAGCLDGRFDALVTGPVHKGIINDAGIPFTGHTEFLAERSGAPTPVMLLAAGALRVALATTHLPLRAVADAITPAGLEHVLRVLNQDLKTKFAISEPRILVCGLNPHAGEGGHLGREEIEVIGPVLERLRTQGLHLIGPLPADTLFTPRHLEHADAILAMYHDQGLPVLKHAGFGRAVNITLGLPLIRTSVDHGTALELAGSGRAEAGSFMEAERLAIEMARSAHGL.

Substrate contacts are provided by H136 and T137. Positions 166, 211, and 266 each coordinate a divalent metal cation. The substrate site is built by K274, N283, and R292.

This sequence belongs to the PdxA family. In terms of assembly, homodimer. It depends on Zn(2+) as a cofactor. Mg(2+) is required as a cofactor. Co(2+) serves as cofactor.

It is found in the cytoplasm. The catalysed reaction is 4-(phosphooxy)-L-threonine + NAD(+) = 3-amino-2-oxopropyl phosphate + CO2 + NADH. It functions in the pathway cofactor biosynthesis; pyridoxine 5'-phosphate biosynthesis; pyridoxine 5'-phosphate from D-erythrose 4-phosphate: step 4/5. In terms of biological role, catalyzes the NAD(P)-dependent oxidation of 4-(phosphooxy)-L-threonine (HTP) into 2-amino-3-oxo-4-(phosphooxy)butyric acid which spontaneously decarboxylates to form 3-amino-2-oxopropyl phosphate (AHAP). In Thioalkalivibrio sulfidiphilus (strain HL-EbGR7), this protein is 4-hydroxythreonine-4-phosphate dehydrogenase.